The primary structure comprises 141 residues: Hemoglobin subunit alpha (141 aa).

Residues 1–141 (VLSDNDKTNV…VSTVLTSKYR (141 aa)) form the Globin domain. A Phosphoserine modification is found at Ser3. The residue at position 7 (Lys7) is an N6-succinyllysine. Phosphothreonine is present on Thr8. Lys11 bears the N6-succinyllysine mark. Lys16 is modified (N6-acetyllysine; alternate). Lys16 carries the N6-succinyllysine; alternate modification. Tyr24 carries the post-translational modification Phosphotyrosine. Ser35 carries the phosphoserine modification. Lys40 carries the N6-succinyllysine modification. Position 58 (His58) interacts with O2. His87 is a binding site for heme b. Phosphoserine is present on Ser102. Thr108 is subject to Phosphothreonine. The residue at position 124 (Ser124) is a Phosphoserine. Phosphothreonine occurs at positions 134 and 137. Ser138 bears the Phosphoserine mark.

It belongs to the globin family. In terms of assembly, heterotetramer of two alpha chains and two beta chains. As to expression, red blood cells.

Functionally, involved in oxygen transport from the lung to the various peripheral tissues. In terms of biological role, hemopressin acts as an antagonist peptide of the cannabinoid receptor CNR1. Hemopressin-binding efficiently blocks cannabinoid receptor CNR1 and subsequent signaling. The chain is Hemoglobin subunit alpha (HBA) from Loxodonta africana (African elephant).